We begin with the raw amino-acid sequence, 385 residues long: 1-deoxy-D-xylulose 5-phosphate reductoisomerase (385 aa).

Positions 10, 11, 12, 13, 37, and 124 each coordinate NADPH. Residue Lys-125 participates in 1-deoxy-D-xylulose 5-phosphate binding. Glu-126 contributes to the NADPH binding site. Residue Asp-150 participates in Mn(2+) binding. 4 residues coordinate 1-deoxy-D-xylulose 5-phosphate: Ser-151, Glu-152, Ser-176, and His-199. Glu-152 contributes to the Mn(2+) binding site. Position 205 (Gly-205) interacts with NADPH. Residues Ser-212, Asn-217, Lys-218, and Glu-221 each contribute to the 1-deoxy-D-xylulose 5-phosphate site. Glu-221 provides a ligand contact to Mn(2+).

Belongs to the DXR family. Mg(2+) serves as cofactor. The cofactor is Mn(2+).

It catalyses the reaction 2-C-methyl-D-erythritol 4-phosphate + NADP(+) = 1-deoxy-D-xylulose 5-phosphate + NADPH + H(+). It functions in the pathway isoprenoid biosynthesis; isopentenyl diphosphate biosynthesis via DXP pathway; isopentenyl diphosphate from 1-deoxy-D-xylulose 5-phosphate: step 1/6. Its function is as follows. Catalyzes the NADPH-dependent rearrangement and reduction of 1-deoxy-D-xylulose-5-phosphate (DXP) to 2-C-methyl-D-erythritol 4-phosphate (MEP). This is 1-deoxy-D-xylulose 5-phosphate reductoisomerase from Clostridium novyi (strain NT).